The chain runs to 643 residues: Phosphomethylpyrimidine synthase (643 aa).

Substrate-binding positions include N248, M277, Y306, H342, S362 to G364, D403 to R406, and E442. Residue H446 participates in Zn(2+) binding. Y469 serves as a coordination point for substrate. H510 lines the Zn(2+) pocket. [4Fe-4S] cluster contacts are provided by C590, C593, and C598.

It belongs to the ThiC family. In terms of assembly, homodimer. Requires [4Fe-4S] cluster as cofactor.

The enzyme catalyses 5-amino-1-(5-phospho-beta-D-ribosyl)imidazole + S-adenosyl-L-methionine = 4-amino-2-methyl-5-(phosphooxymethyl)pyrimidine + CO + 5'-deoxyadenosine + formate + L-methionine + 3 H(+). The protein operates within cofactor biosynthesis; thiamine diphosphate biosynthesis. In terms of biological role, catalyzes the synthesis of the hydroxymethylpyrimidine phosphate (HMP-P) moiety of thiamine from aminoimidazole ribotide (AIR) in a radical S-adenosyl-L-methionine (SAM)-dependent reaction. The polypeptide is Phosphomethylpyrimidine synthase (Burkholderia lata (strain ATCC 17760 / DSM 23089 / LMG 22485 / NCIMB 9086 / R18194 / 383)).